A 200-amino-acid polypeptide reads, in one-letter code: Cysteine dioxygenase type 1 (200 aa).

Histidine 86, histidine 88, and histidine 140 together coordinate Fe cation. A cross-link (3'-(S-cysteinyl)-tyrosine (Cys-Tyr)) is located at residues 93–157; sequence CFLKMLQGNL…TEPAVSLHLY (65 aa).

It belongs to the cysteine dioxygenase family. As to quaternary structure, monomer. Fe(2+) is required as a cofactor. It depends on Ni(2+) as a cofactor. Requires Zn(2+) as cofactor. The thioether cross-link between Cys-93 and Tyr-157 plays a structural role through stabilizing the Fe(2+) ion, and prevents the production of highly damaging free hydroxyl radicals by holding the oxygen radical via hydroxyl hydrogen. As to expression, highly expressed in liver and placenta. Low expression in heart, brain and pancreas. Also detected in hepatoblastoma Hep-G2 cells.

It carries out the reaction L-cysteine + O2 = 3-sulfino-L-alanine + H(+). It participates in organosulfur biosynthesis; taurine biosynthesis; hypotaurine from L-cysteine: step 1/2. Its function is as follows. Catalyzes the oxidation of cysteine to cysteine sulfinic acid with addition of molecular dioxygen. This is Cysteine dioxygenase type 1 (CDO1) from Homo sapiens (Human).